A 299-amino-acid polypeptide reads, in one-letter code: MTLSQTAVSRPQIFICTLLSSESLVDLYTQILEGDRYSLVHATYDNFLEIVEQGKHRIDCLIFEKNAALPKVVSHLHREAILLPAVLLQVEESVEKTSQPNSADRDPQQDSYYHIAEVIVDHDQEDILSSIDCAIAQFLQLSKACRLPTRLQKKYADEAIQDNLATQQQRLSQKLKERLGYLGVYYKRNPQQFFHKLTEEEQTDYLVTLKRDYRDIILNYFRQDSSVNQEIDDFVTQIFFADISILKILEIHMELMDAFAKKLKLEGRNEDILLDYRLTLIDIMAHLCEMYRRSIPKTR.

The segment at 9-148 (SRPQIFICTL…LQLSKACRLP (140 aa)) is psR domain, binds oxidized quinones. Residues 9-179 (SRPQIFICTL…RLSQKLKERL (171 aa)) form the KaiA N-terminal domain. Residues 180 to 188 (GYLGVYYKR) are flexible linker. The KaiA C-terminal domain occupies 189–297 (NPQQFFHKLT…CEMYRRSIPK (109 aa)).

Homodimer. The KaiABC complex composition changes during the circadian cycle to control KaiC phosphorylation. Complexes KaiC(6), KaiA(2-4):KaiC(6), KaiB(6):KaiC(6) and KaiC(6):KaiB(6):KaiA(12) are among the most important forms, many form cooperatively. KaiA and CikA bind to the same region of the KaiB(fs) form and therefore compete.

Its function is as follows. Key component of the KaiABC oscillator complex, which constitutes the main circadian regulator in cyanobacteria. Complex composition changes during the circadian cycle to control KaiC phosphorylation. KaiA stimulates KaiC autophosphorylation, while KaiB sequesters KaiA, leading to KaiC autodephosphorylation. KaiA binding to the KaiC CII domain during the subjective day yields KaiA(2-4):KaiC(6) complexes which stimulate KaiC autophosphorylation. Phospho-Ser-431 KaiC accumulation triggers binding of KaiB during the subjective night to form the KaiB(6):KaiC(6) complex, leading to changes in the output regulators CikA and SasA. KaiB(6):KaiC(6) formation exposes a site for KaiA binding on KaiB that sequesters KaiA from KaiC's CII domain, making the KaiC(6):KaiB(6):KaiA(12) complex resulting in KaiC autodephosphorylation. Complete dephosphorylation of KaiC leads to dissociation of KaiA(2):KaiB(1), completing 1 cycle of the Kai oscillator. In terms of biological role, binds oxidized quinones via the N-terminal PsR domain, allowing it to sense redox changes and possibly mediate clock input. The protein is Circadian clock oscillator protein KaiA of Acaryochloris marina (strain MBIC 11017).